A 238-amino-acid polypeptide reads, in one-letter code: Large ribosomal subunit protein uL2 (238 aa).

The segment covering Met-1–Gly-11 has biased composition (polar residues). Disordered stretches follow at residues Met-1–His-22 and Phe-202–Gly-223.

It belongs to the universal ribosomal protein uL2 family. As to quaternary structure, part of the 50S ribosomal subunit. Forms a bridge to the 30S subunit in the 70S ribosome.

Functionally, one of the primary rRNA binding proteins. Required for association of the 30S and 50S subunits to form the 70S ribosome, for tRNA binding and peptide bond formation. It has been suggested to have peptidyltransferase activity; this is somewhat controversial. Makes several contacts with the 16S rRNA in the 70S ribosome. This is Large ribosomal subunit protein uL2 from Methanosarcina acetivorans (strain ATCC 35395 / DSM 2834 / JCM 12185 / C2A).